The chain runs to 85 residues: Defensin-like protein 11 (85 aa).

Residues 1-29 (MGKTISFSAIILVFLLVSTGLMKQGDAQA) form the signal peptide. 4 disulfide bridges follow: Cys-32/Cys-84, Cys-44/Cys-68, Cys-54/Cys-75, and Cys-58/Cys-77.

This sequence belongs to the DEFL family.

It is found in the secreted. The sequence is that of Defensin-like protein 11 from Arabidopsis thaliana (Mouse-ear cress).